We begin with the raw amino-acid sequence, 346 residues long: tRNA N6-adenosine threonylcarbamoyltransferase (346 aa).

The Fe cation site is built by histidine 111 and histidine 115. Residues 134–138 (LVSGG), aspartate 167, glycine 180, and asparagine 279 contribute to the substrate site. Aspartate 307 is a binding site for Fe cation.

This sequence belongs to the KAE1 / TsaD family. It depends on Fe(2+) as a cofactor.

It is found in the cytoplasm. It catalyses the reaction L-threonylcarbamoyladenylate + adenosine(37) in tRNA = N(6)-L-threonylcarbamoyladenosine(37) in tRNA + AMP + H(+). Its function is as follows. Required for the formation of a threonylcarbamoyl group on adenosine at position 37 (t(6)A37) in tRNAs that read codons beginning with adenine. Is involved in the transfer of the threonylcarbamoyl moiety of threonylcarbamoyl-AMP (TC-AMP) to the N6 group of A37, together with TsaE and TsaB. TsaD likely plays a direct catalytic role in this reaction. This chain is tRNA N6-adenosine threonylcarbamoyltransferase, found in Burkholderia mallei (strain ATCC 23344).